A 140-amino-acid polypeptide reads, in one-letter code: Oocyte-expressed protein homolog (140 aa).

One can recognise a KH; atypical domain in the interval 40–101 (PLVFFLEAWL…AVQRQVKSVL (62 aa)).

This sequence belongs to the KHDC1 family. Component of the subcortical maternal complex (SCMC), at least composed of NLRP5, KHDC3, OOEP, and TLE6. Within the complex, interacts with NLRP5, KHDC3 and TLE6. As part of the SCMC interacts with the SCMC-associated protein NLRP4F. The SCMC may facilitate translocation of its components between the nuclear and cytoplasmic compartments. Forms a scaffold complex with KHDC3/FILIA, and interacts with BLM and TRIM25 at DNA replication forks.

The protein localises to the cytoplasm. It is found in the nucleus. In terms of biological role, component of the subcortical maternal complex (SCMC), a multiprotein complex that plays a key role in early embryonic development. The SCMC complex is a structural constituent of cytoplasmic lattices, which consist in fibrous structures found in the cytoplasm of oocytes and preimplantation embryos. They are required to store maternal proteins critical for embryonic development, such as proteins that control epigenetic reprogramming of the preimplantation embryo, and prevent their degradation or activation. As part of the OOEP-KHDC3 scaffold, recruits BLM and TRIM25 to DNA replication forks, thereby promoting the ubiquitination of BLM by TRIM25, enhancing BLM retainment at replication forks and therefore promoting stalled replication fork restart. Positively regulates the homologous recombination-mediated DNA double-strand break (DSB) repair pathway by regulating ATM activation and RAD51 recruitment to DSBs in oocytes. Thereby contributes to oocyte survival and the resumption and completion of meiosis. The chain is Oocyte-expressed protein homolog (OOEP) from Bos taurus (Bovine).